Reading from the N-terminus, the 295-residue chain is ATP synthase gamma chain (295 aa).

Belongs to the ATPase gamma chain family. As to quaternary structure, F-type ATPases have 2 components, CF(1) - the catalytic core - and CF(0) - the membrane proton channel. CF(1) has five subunits: alpha(3), beta(3), gamma(1), delta(1), epsilon(1). CF(0) has three main subunits: a, b and c.

Its subcellular location is the cell membrane. Its function is as follows. Produces ATP from ADP in the presence of a proton gradient across the membrane. The gamma chain is believed to be important in regulating ATPase activity and the flow of protons through the CF(0) complex. The chain is ATP synthase gamma chain from Desulforudis audaxviator (strain MP104C).